The following is a 150-amino-acid chain: UPF0102 protein sll0189 (150 aa).

This sequence belongs to the UPF0102 family.

In Synechocystis sp. (strain ATCC 27184 / PCC 6803 / Kazusa), this protein is UPF0102 protein sll0189.